Reading from the N-terminus, the 115-residue chain is Large ribosomal subunit protein bL19 (115 aa).

Belongs to the bacterial ribosomal protein bL19 family.

Functionally, this protein is located at the 30S-50S ribosomal subunit interface and may play a role in the structure and function of the aminoacyl-tRNA binding site. The sequence is that of Large ribosomal subunit protein bL19 from Nitratidesulfovibrio vulgaris (strain ATCC 29579 / DSM 644 / CCUG 34227 / NCIMB 8303 / VKM B-1760 / Hildenborough) (Desulfovibrio vulgaris).